A 318-amino-acid chain; its full sequence is MEMAAAVGGSGRRDAEAELNLPPGFRFHPTDEELVVHYLCRKVARQPLPVPIIAEVDLYKLDPWDLPEKALFGRKEWYFFTPRDRKYPNGSRPNRAAGRGYWKATGADKPVAPKGSARTVGIKKALVFYSGKAPRGVKTDWIMHEYRLADADRAPGGKKGSQKLDEWVLCRLYNKKNNWEKVKLEQQDVASVAAAAPRNHHHQNGEVMDAAAADTMSDSFQTHDSDIDNASAGLRHGGCGGGGFGDVAPPRNGFVTVKEDNDWFTGLNFDELQPPYMMNLQHMQMQMVNPAAPGHDGGYLQSISSPQMKMWQTILPPF.

The NAC domain maps to 21 to 175; sequence LPPGFRFHPT…EWVLCRLYNK (155 aa).

As to expression, expressed in stems, leaf blades and callus. Weakly expressed in developing flowers.

It is found in the nucleus. Probable transcription factor involved in stress response. This Oryza sativa subsp. japonica (Rice) protein is NAC domain-containing protein 68.